A 286-amino-acid chain; its full sequence is NH(3)-dependent NAD(+) synthetase (286 aa).

51–58 contributes to the ATP binding site; sequence GISGGVDS. Asp57 serves as a coordination point for Mg(2+). Residue Arg148 coordinates deamido-NAD(+). Thr168 serves as a coordination point for ATP. Glu173 provides a ligand contact to Mg(2+). Positions 181 and 188 each coordinate deamido-NAD(+). The ATP site is built by Lys197 and Thr219. 268 to 269 contributes to the deamido-NAD(+) binding site; it reads HK.

Belongs to the NAD synthetase family. As to quaternary structure, homodimer.

The enzyme catalyses deamido-NAD(+) + NH4(+) + ATP = AMP + diphosphate + NAD(+) + H(+). The protein operates within cofactor biosynthesis; NAD(+) biosynthesis; NAD(+) from deamido-NAD(+) (ammonia route): step 1/1. In terms of biological role, catalyzes the ATP-dependent amidation of deamido-NAD to form NAD. Uses ammonia as a nitrogen source. The sequence is that of NH(3)-dependent NAD(+) synthetase from Paraburkholderia phytofirmans (strain DSM 17436 / LMG 22146 / PsJN) (Burkholderia phytofirmans).